Consider the following 42-residue polypeptide: Delta-hexatoxin-Iw1a (42 aa).

Disulfide bonds link C1–C15, C8–C20, C14–C31, and C16–C42.

The protein belongs to the neurotoxin 06 (delta-actx) family. In terms of tissue distribution, expressed by the venom gland.

The protein localises to the secreted. In terms of biological role, inhibits tetrodotoxin-sensitive sodium channels by binding to site 3. It slows the inactivation, causes a prolongation of action potential duration resulting in repetitive firing in autonomic and motor nerve fibers. Does not depolarize the resting potential. Does not affect tetrodotoxin-resistant sodium channels. This lethal neurotoxin is active on both insect and mammalian voltage-gated sodium channels (Nav). This Illawarra wisharti (Illawarra funnel-web spider) protein is Delta-hexatoxin-Iw1a.